Here is a 194-residue protein sequence, read N- to C-terminus: uncharacterized protein (194 aa).

This is an uncharacterized protein from Tomato ringspot virus (isolate raspberry) (ToRSV).